The primary structure comprises 405 residues: Arginine biosynthesis bifunctional protein ArgJ (405 aa).

Substrate contacts are provided by T152, K178, T189, E276, N400, and T405. T189 serves as the catalytic Nucleophile.

This sequence belongs to the ArgJ family. In terms of assembly, heterotetramer of two alpha and two beta chains.

The protein resides in the cytoplasm. The catalysed reaction is N(2)-acetyl-L-ornithine + L-glutamate = N-acetyl-L-glutamate + L-ornithine. The enzyme catalyses L-glutamate + acetyl-CoA = N-acetyl-L-glutamate + CoA + H(+). It functions in the pathway amino-acid biosynthesis; L-arginine biosynthesis; L-ornithine and N-acetyl-L-glutamate from L-glutamate and N(2)-acetyl-L-ornithine (cyclic): step 1/1. It participates in amino-acid biosynthesis; L-arginine biosynthesis; N(2)-acetyl-L-ornithine from L-glutamate: step 1/4. Catalyzes two activities which are involved in the cyclic version of arginine biosynthesis: the synthesis of N-acetylglutamate from glutamate and acetyl-CoA as the acetyl donor, and of ornithine by transacetylation between N(2)-acetylornithine and glutamate. This is Arginine biosynthesis bifunctional protein ArgJ from Pseudomonas savastanoi pv. phaseolicola (strain 1448A / Race 6) (Pseudomonas syringae pv. phaseolicola (strain 1448A / Race 6)).